Here is a 182-residue protein sequence, read N- to C-terminus: CDP-diacylglycerol--glycerol-3-phosphate 3-phosphatidyltransferase (182 aa).

Over 2–12 (QFNIPTLLTLF) the chain is Cytoplasmic. A helical membrane pass occupies residues 13–37 (RVALIPFFVLAFYLPFVWAPLLCAL). Residues 38–60 (IFVFAAVTDWFDGFLARRWKQTT) lie on the Periplasmic side of the membrane. Residues 61–81 (RFGAFLDPVADKVMVAVALVL) form a helical membrane-spanning segment. The Cytoplasmic segment spans residues 82 to 86 (VAEYY). The chain crosses the membrane as a helical span at residues 87–107 (HSWWITLPAATMIAREIIISA). The Periplasmic portion of the chain corresponds to 108–145 (LREWMAEIGKRSSVAVSWIGKVKTTAQMMALFALLWRP). The chain crosses the membrane as a helical span at residues 146–168 (ERIVEGIGVAALYIAAVLTFWSM). Topologically, residues 169-181 (FQYLNAARHDLLE) are cytoplasmic.

This sequence belongs to the CDP-alcohol phosphatidyltransferase class-I family.

The protein localises to the cell inner membrane. The catalysed reaction is a CDP-1,2-diacyl-sn-glycerol + sn-glycerol 3-phosphate = a 1,2-diacyl-sn-glycero-3-phospho-(1'-sn-glycero-3'-phosphate) + CMP + H(+). The protein operates within phospholipid metabolism; phosphatidylglycerol biosynthesis; phosphatidylglycerol from CDP-diacylglycerol: step 1/2. Its function is as follows. Catalyzes the conversion of cytidine diphosphate diacylglycerol (CDP-DG) and glycerol 3-phosphate into phosphatidylglycerol. Essential for the synthesis of anionic phospholipids, thereby playing a role in balancing the ratio of zwitterionic and anionic phospholipids, which is thought to be important for normal membrane function. This is CDP-diacylglycerol--glycerol-3-phosphate 3-phosphatidyltransferase from Pectobacterium atrosepticum (strain SCRI 1043 / ATCC BAA-672) (Erwinia carotovora subsp. atroseptica).